The chain runs to 754 residues: Polycomb protein mes-3 (754 aa).

Residues 1-83 (MTPATAEVKV…PTKLENIQKT (83 aa)) form a disordered region. Over residues 31–40 (ARREEEKENL) the composition is skewed to basic and acidic residues. The segment covering 51 to 61 (SSEAGSSRESS) has biased composition (low complexity).

In terms of assembly, forms a heterotrimeric complex with the Polycomb proteins mes-2 and mes-3. Does not interact with mes-4. Interacts with nyfa-1. As to expression, in adults, it is predominantly expressed in the germline, and weakly expressed in intestinal cells.

It is found in the nucleus. Component of a Polycomb group (PcG) complex. PcG proteins act by forming multiprotein complexes, which are required to maintain the transcriptionally repressive state of homeotic genes throughout development. In association with the nfya-1-NF-Y complex, may play a role in repressing the expression of the homeobox protein egl-5 in tissues such as the head. PcG proteins are not required to initiate repression, but to maintain it during later stages of development. The mes-2/mes-3/mes-6 complex may participate in the global inactivation of the X chromosomes in germline cells. The complex may act via methylation of histone H3 'Lys-27', rendering chromatin heritably changed in its expressibility. This complex is required to exclude mes-4 from the inactivated X-chromosomes in germline cells. The polypeptide is Polycomb protein mes-3 (Caenorhabditis elegans).